Here is a 375-residue protein sequence, read N- to C-terminus: Methylthioribose-1-phosphate isomerase (375 aa).

Asp-257 functions as the Proton donor in the catalytic mechanism.

It belongs to the eIF-2B alpha/beta/delta subunits family. MtnA subfamily.

The protein localises to the cytoplasm. The protein resides in the nucleus. It catalyses the reaction 5-(methylsulfanyl)-alpha-D-ribose 1-phosphate = 5-(methylsulfanyl)-D-ribulose 1-phosphate. It functions in the pathway amino-acid biosynthesis; L-methionine biosynthesis via salvage pathway; L-methionine from S-methyl-5-thio-alpha-D-ribose 1-phosphate: step 1/6. Catalyzes the interconversion of methylthioribose-1-phosphate (MTR-1-P) into methylthioribulose-1-phosphate (MTRu-1-P). This chain is Methylthioribose-1-phosphate isomerase, found in Leishmania infantum.